Here is a 223-residue protein sequence, read N- to C-terminus: Adenylate kinase 4, mitochondrial (223 aa).

Gly15–Thr20 contributes to the a ribonucleoside 5'-triphosphate binding site. Residues Ser35 to Val64 are NMP. Positions 36 and 41 each coordinate AMP. Lys60 bears the N6-succinyllysine mark. Residues Leu62–Val64, Gly89–Arg92, and Gln96 each bind AMP. Residues Arg125–Asp162 form an LID region. Residues Arg126 and Val135 to Tyr136 contribute to the a ribonucleoside 5'-triphosphate site. Arg170 contacts AMP. Lys175 carries the N6-acetyllysine modification. 2 positions are modified to N6-acetyllysine; alternate: Lys179 and Lys186. An N6-succinyllysine; alternate mark is found at Lys179 and Lys186. Position 199 (Thr199) interacts with a ribonucleoside 5'-triphosphate.

This sequence belongs to the adenylate kinase family. AK3 subfamily. In terms of assembly, monomer. Interacts with SLC25A5/ANT2. As to expression, expressed in the pyramidal cells in the hippocampus.

The protein resides in the mitochondrion matrix. The catalysed reaction is a ribonucleoside 5'-phosphate + ATP = a ribonucleoside 5'-diphosphate + ADP. It catalyses the reaction AMP + ATP = 2 ADP. The enzyme catalyses GTP + AMP = GDP + ADP. It carries out the reaction CMP + ATP = CDP + ADP. The catalysed reaction is GTP + CMP = CDP + GDP. It catalyses the reaction dAMP + ATP = dADP + ADP. The enzyme catalyses dCMP + ATP = dCDP + ADP. It carries out the reaction a 2'-deoxyribonucleoside 5'-diphosphate + ATP = a 2'-deoxyribonucleoside 5'-triphosphate + ADP. The catalysed reaction is a ribonucleoside 5'-diphosphate + ATP = a ribonucleoside 5'-triphosphate + ADP. It catalyses the reaction GDP + ATP = GTP + ADP. The enzyme catalyses CDP + GTP = CTP + GDP. It carries out the reaction CDP + ATP = CTP + ADP. The catalysed reaction is UDP + ATP = UTP + ADP. It catalyses the reaction GTP + UDP = UTP + GDP. The enzyme catalyses dADP + GTP = dATP + GDP. It carries out the reaction dCDP + GTP = dCTP + GDP. The catalysed reaction is dCDP + ATP = dCTP + ADP. It catalyses the reaction dGDP + ATP = dGTP + ADP. The enzyme catalyses dTDP + GTP = dTTP + GDP. It carries out the reaction dTDP + ATP = dTTP + ADP. Broad-specificity mitochondrial nucleoside phosphate kinase involved in cellular nucleotide homeostasis by catalyzing nucleoside-phosphate interconversions. Similar to other adenylate kinases, preferentially catalyzes the phosphorylation of the nucleoside monophosphate AMP with ATP as phosphate donor to produce ADP. Phosphorylates only AMP when using GTP as phosphate donor. In vitro, can also catalyze the phosphorylation of CMP, dAMP and dCMP and use GTP as an alternate phosphate donor. Moreover, exhibits a diphosphate kinase activity, producing ATP, CTP, GTP, UTP, TTP, dATP, dCTP and dGTP from the corresponding diphosphate substrates with either ATP or GTP as phosphate donors. Plays a role in controlling cellular ATP levels by regulating phosphorylation and activation of the energy sensor protein kinase AMPK. Plays a protective role in the cellular response to oxidative stress. This chain is Adenylate kinase 4, mitochondrial, found in Rattus norvegicus (Rat).